Here is a 648-residue protein sequence, read N- to C-terminus: Cysteine-rich receptor-like protein kinase 38 (648 aa).

A signal peptide spans 1 to 25 (MKNSAAIFLTSSLILLLQTLHGVKA). Gnk2-homologous domains lie at 26–127 (GFIC…DQST) and 140–247 (PSPV…FYPF). Residues 26 to 278 (GFICVGSSFP…EAISITRLKG (253 aa)) are Extracellular-facing. N-linked (GlcNAc...) asparagine glycosylation is found at asparagine 37, asparagine 63, asparagine 151, asparagine 174, and asparagine 253. A helical membrane pass occupies residues 279-299 (GIIAIFVVPIVINLLVFIGLI). Residues 300–648 (RAYTRIRKSY…ELSITELSPR (349 aa)) are Cytoplasmic-facing. In terms of domain architecture, Protein kinase spans 339-611 (FSFENKIGQG…VIQWLGSETI (273 aa)). ATP is bound by residues 345-353 (IGQGGFGSV) and lysine 367. Phosphotyrosine is present on tyrosine 412. Residue aspartate 464 is the Proton acceptor of the active site. The residue at position 468 (serine 468) is a Phosphoserine. Residue threonine 504 is modified to Phosphothreonine. Tyrosine 512 is subject to Phosphotyrosine.

This sequence belongs to the protein kinase superfamily. Ser/Thr protein kinase family. CRK subfamily.

The protein resides in the membrane. It catalyses the reaction L-seryl-[protein] + ATP = O-phospho-L-seryl-[protein] + ADP + H(+). The enzyme catalyses L-threonyl-[protein] + ATP = O-phospho-L-threonyl-[protein] + ADP + H(+). The protein is Cysteine-rich receptor-like protein kinase 38 (CRK38) of Arabidopsis thaliana (Mouse-ear cress).